We begin with the raw amino-acid sequence, 187 residues long: UPF0301 protein ESA_00394 (187 aa).

The protein belongs to the UPF0301 (AlgH) family.

The sequence is that of UPF0301 protein ESA_00394 from Cronobacter sakazakii (strain ATCC BAA-894) (Enterobacter sakazakii).